The following is a 108-amino-acid chain: Small ribosomal subunit protein uS17 (108 aa).

It belongs to the universal ribosomal protein uS17 family. Part of the 30S ribosomal subunit.

Functionally, one of the primary rRNA binding proteins, it binds specifically to the 5'-end of 16S ribosomal RNA. The protein is Small ribosomal subunit protein uS17 of Methanoculleus marisnigri (strain ATCC 35101 / DSM 1498 / JR1).